The primary structure comprises 324 residues: Thiazole synthase (324 aa).

The Schiff-base intermediate with DXP role is filled by K167. Residues G228, 254 to 255 (AG), and 276 to 277 (NT) contribute to the 1-deoxy-D-xylulose 5-phosphate site.

It belongs to the ThiG family. In terms of assembly, homotetramer. Forms heterodimers with either ThiH or ThiS.

The protein localises to the cytoplasm. It carries out the reaction [ThiS sulfur-carrier protein]-C-terminal-Gly-aminoethanethioate + 2-iminoacetate + 1-deoxy-D-xylulose 5-phosphate = [ThiS sulfur-carrier protein]-C-terminal Gly-Gly + 2-[(2R,5Z)-2-carboxy-4-methylthiazol-5(2H)-ylidene]ethyl phosphate + 2 H2O + H(+). The protein operates within cofactor biosynthesis; thiamine diphosphate biosynthesis. Functionally, catalyzes the rearrangement of 1-deoxy-D-xylulose 5-phosphate (DXP) to produce the thiazole phosphate moiety of thiamine. Sulfur is provided by the thiocarboxylate moiety of the carrier protein ThiS. In vitro, sulfur can be provided by H(2)S. This Paramagnetospirillum magneticum (strain ATCC 700264 / AMB-1) (Magnetospirillum magneticum) protein is Thiazole synthase.